Consider the following 120-residue polypeptide: MDKKQSRLRRGRQTRAKIAELKVNRLAVHRTNLHIYASIIGPDATVLASASTLEAEVRQELAGQSGKGGNVAAAALVGKRVAEKALKAGIAEVAFDRSGFRYHGRVKAVAEAAREAGLKF.

It belongs to the universal ribosomal protein uL18 family. Part of the 50S ribosomal subunit; part of the 5S rRNA/L5/L18/L25 subcomplex. Contacts the 5S and 23S rRNAs.

Its function is as follows. This is one of the proteins that bind and probably mediate the attachment of the 5S RNA into the large ribosomal subunit, where it forms part of the central protuberance. This is Large ribosomal subunit protein uL18 from Janthinobacterium sp. (strain Marseille) (Minibacterium massiliensis).